The primary structure comprises 103 residues: DNA-directed RNA polymerase subunit omega (103 aa).

The tract at residues 52 to 103 (EIESGNVTIHPDPEGKREAVRRRIEEEKRRKEEEEKKIKEQIAKEKEDGEKI) is disordered. Basic and acidic residues predominate over residues 62-103 (PDPEGKREAVRRRIEEEKRRKEEEEKKIKEQIAKEKEDGEKI).

Belongs to the RNA polymerase subunit omega family. The RNAP catalytic core consists of 2 alpha, 1 beta, 1 beta' and 1 omega subunit. When a sigma factor is associated with the core the holoenzyme is formed, which can initiate transcription.

It catalyses the reaction RNA(n) + a ribonucleoside 5'-triphosphate = RNA(n+1) + diphosphate. Its function is as follows. Promotes RNA polymerase assembly. Latches the N- and C-terminal regions of the beta' subunit thereby facilitating its interaction with the beta and alpha subunits. This chain is DNA-directed RNA polymerase subunit omega, found in Streptococcus pneumoniae serotype 19F (strain G54).